The chain runs to 366 residues: Mitogen-activated protein kinase 13 (366 aa).

Residues 25 to 308 (YVSLTHIGSG…ASQALAHPFF (284 aa)) enclose the Protein kinase domain. ATP is bound at residue 31 to 39 (IGSGAYGSV). S47 is modified (phosphoserine). K54 is a binding site for ATP. The active-site Proton acceptor is the D150. Position 180 is a phosphothreonine; by MAP2K3, MAP2K4, MAP2K6 and MAP2K7 (T180). Positions 180–182 (TGY) match the TXY motif. Position 182 is a phosphotyrosine; by MAP2K3, MAP2K4, MAP2K6 and MAP2K7 (Y182). S350 bears the Phosphoserine mark.

It belongs to the protein kinase superfamily. CMGC Ser/Thr protein kinase family. MAP kinase subfamily. Interacts with MAPK8IP2. Mg(2+) is required as a cofactor. Post-translationally, dually phosphorylated on Thr-180 and Tyr-182 by MAP2K3/MKK3, MAP2K4/MKK4, MAP2K6/MKK6 and MAP2K7/MKK7, which activates the enzyme. Dephosphorylated by dual specificity phosphatase DUSP1.

It carries out the reaction L-seryl-[protein] + ATP = O-phospho-L-seryl-[protein] + ADP + H(+). The enzyme catalyses L-threonyl-[protein] + ATP = O-phospho-L-threonyl-[protein] + ADP + H(+). Activated by phosphorylation on threonine and tyrosine by dual specificity kinases, MAP2K3/MKK3 MAP2K6/MKK6, MAP2K4/MKK4 and MAP2K7/MKK7. Activation by ultraviolet radiation, hyperosmotic shock, anisomycin or by TNF-alpha is mediated by MAP2K3/MKK3. Inhibited by dual specificity phosphatase DUSP1. In terms of biological role, serine/threonine kinase which acts as an essential component of the MAP kinase signal transduction pathway. MAPK13 is one of the four p38 MAPKs which play an important role in the cascades of cellular responses evoked by extracellular stimuli such as pro-inflammatory cytokines or physical stress leading to direct activation of transcription factors such as ELK1 and ATF2. Accordingly, p38 MAPKs phosphorylate a broad range of proteins and it has been estimated that they may have approximately 200 to 300 substrates each. MAPK13 is one of the less studied p38 MAPK isoforms. Some of the targets are downstream kinases such as MAPKAPK2, which are activated through phosphorylation and further phosphorylate additional targets. Plays a role in the regulation of protein translation by phosphorylating and inactivating EEF2K. Involved in cytoskeletal remodeling through phosphorylation of MAPT and STMN1. Mediates UV irradiation induced up-regulation of the gene expression of CXCL14. Plays an important role in the regulation of epidermal keratinocyte differentiation, apoptosis and skin tumor development. Phosphorylates the transcriptional activator MYB in response to stress which leads to rapid MYB degradation via a proteasome-dependent pathway. MAPK13 also phosphorylates and down-regulates PRKD1 during regulation of insulin secretion in pancreatic beta cells. The polypeptide is Mitogen-activated protein kinase 13 (MAPK13) (Bos taurus (Bovine)).